Consider the following 294-residue polypeptide: MKLAVYGKGGIGKSTTSCNISIALARRGKKVLQIGCDPKHDSTFTLTGFLIPTIIDTLQSKDYHYEDVWPEDVIYQGYGGVDCVEAGGPPAGAGCGGYVVGETVKLLKELNAFYEYDVILFDVLGDVVCGGFAAPLNYADYCIIVTDNGFDALFAANRIVASVREKARTHPLRVAGLVGNRTDARDLIDKYVEVCPMPVLEVLPLIEDIRISRVKGQTLFEIAETQTAVSYVCDYFLNIADQLLSQPEGVVPNELGDRELFSLLSDFYLNPTSNSEKNANISGLEPDSLDFLIV.

ATP contacts are provided by residues 10 to 15 (GIGKST) and K39. S14 serves as a coordination point for Mg(2+). [4Fe-4S] cluster is bound by residues C95 and C129. 180–181 (NR) provides a ligand contact to ATP.

It belongs to the NifH/BchL/ChlL family. In terms of assembly, homodimer. Protochlorophyllide reductase is composed of three subunits; ChlL, ChlN and ChlB. The cofactor is [4Fe-4S] cluster.

The protein localises to the plastid. The protein resides in the chloroplast. The enzyme catalyses chlorophyllide a + oxidized 2[4Fe-4S]-[ferredoxin] + 2 ADP + 2 phosphate = protochlorophyllide a + reduced 2[4Fe-4S]-[ferredoxin] + 2 ATP + 2 H2O. The protein operates within porphyrin-containing compound metabolism; chlorophyll biosynthesis (light-independent). Functionally, component of the dark-operative protochlorophyllide reductase (DPOR) that uses Mg-ATP and reduced ferredoxin to reduce ring D of protochlorophyllide (Pchlide) to form chlorophyllide a (Chlide). This reaction is light-independent. The L component serves as a unique electron donor to the NB-component of the complex, and binds Mg-ATP. The chain is Light-independent protochlorophyllide reductase iron-sulfur ATP-binding protein from Pleurastrum terricola (Filamentous green alga).